A 311-amino-acid polypeptide reads, in one-letter code: Ketoisovalerate oxidoreductase subunit VorB (311 aa).

As to quaternary structure, heterotetramer of one alpha, one beta, one delta and one gamma chain.

It catalyses the reaction 3-methyl-2-oxobutanoate + 2 oxidized [2Fe-2S]-[ferredoxin] + CoA = 2-methylpropanoyl-CoA + 2 reduced [2Fe-2S]-[ferredoxin] + CO2 + H(+). The polypeptide is Ketoisovalerate oxidoreductase subunit VorB (vorB) (Pyrococcus abyssi (strain GE5 / Orsay)).